The sequence spans 406 residues: MIIGNCLILKDFSSEPFWGAVEIENGTIKRVLQGEVKVDLDLSGKLVMPALFNTHTHAPMTLLRGVAEDLSFEEWLFSKVLPIEDRLTEKMAYYGTILAQMEMARHGIAGFVDMYFHEEWIAKAVRDFGMRALLTRGLVDSNGDDGGRLEENLKLYNEWNGFEGRIFVGFGPHSPYLCSEEYLKRVFDTAKSLNAPVTIHLYETSKEEYDLEDILNIGLKEVKTIAAHCVHLPERYFGVLKDIPFFVSHNPASNLKLGNGIAPVQRMIEHGMKVTLGTDGAASNNSLNLFFEMRLASLLQKAQNPRNLDVNTCLKMVTYDGAQAMGFKSGKIEEGWNADLVVIDLDLPEMFPVQNIKNHLVHAFSGEVFATMVAGKWIYFDGEYPTIDSEEVKRELARIEKELYSS.

His55 and His57 together coordinate Zn(2+). Glu84, Arg136, Arg148, and His173 together coordinate substrate. Zn(2+) is bound at residue His200. Residues Glu203 and Asp279 each contribute to the substrate site. A Zn(2+)-binding site is contributed by Asp279.

This sequence belongs to the metallo-dependent hydrolases superfamily. MTA/SAH deaminase family. Requires Zn(2+) as cofactor.

The enzyme catalyses S-adenosyl-L-homocysteine + H2O + H(+) = S-inosyl-L-homocysteine + NH4(+). The catalysed reaction is S-methyl-5'-thioadenosine + H2O + H(+) = S-methyl-5'-thioinosine + NH4(+). Catalyzes the deamination of 5-methylthioadenosine and S-adenosyl-L-homocysteine into 5-methylthioinosine and S-inosyl-L-homocysteine, respectively. Is also able to deaminate adenosine. Adenosine-5-monophosphate (AMP) and S-adenosyl-L-methionine (SAM) are not enzyme substrates. In Thermotoga maritima (strain ATCC 43589 / DSM 3109 / JCM 10099 / NBRC 100826 / MSB8), this protein is 5-methylthioadenosine/S-adenosylhomocysteine deaminase (mtaD).